Here is a 354-residue protein sequence, read N- to C-terminus: UDP-3-O-acylglucosamine N-acyltransferase (354 aa).

Residue His-258 is the Proton acceptor of the active site.

It belongs to the transferase hexapeptide repeat family. LpxD subfamily. As to quaternary structure, homotrimer.

The catalysed reaction is a UDP-3-O-[(3R)-3-hydroxyacyl]-alpha-D-glucosamine + a (3R)-hydroxyacyl-[ACP] = a UDP-2-N,3-O-bis[(3R)-3-hydroxyacyl]-alpha-D-glucosamine + holo-[ACP] + H(+). Its pathway is bacterial outer membrane biogenesis; LPS lipid A biosynthesis. Its function is as follows. Catalyzes the N-acylation of UDP-3-O-acylglucosamine using 3-hydroxyacyl-ACP as the acyl donor. Is involved in the biosynthesis of lipid A, a phosphorylated glycolipid that anchors the lipopolysaccharide to the outer membrane of the cell. This chain is UDP-3-O-acylglucosamine N-acyltransferase, found in Rhizobium meliloti (strain 1021) (Ensifer meliloti).